Here is a 177-residue protein sequence, read N- to C-terminus: MKGFVVISRFILTLFILITPGLAGVVNYAENSEWNVPKYGNVLDSNCQGQKPVTFFGSVTEHVSNSWWIKLYDYMMTFISGEKLCMQNVAYEFEDISLCMDVVGSKCIPTLQSTDIEKVVNSTSAYLENSESDLTLGCFQIQRFQEESTLYIRALKSSEPVSCDTVRCIHFNHIPYV.

An N-terminal signal peptide occupies residues 1-23 (MKGFVVISRFILTLFILITPGLA). The N-linked (GlcNAc...) asparagine glycan is linked to Asn-121.

The protein resides in the endoplasmic reticulum. Its subcellular location is the golgi apparatus. In terms of biological role, has a role in meiosis. The chain is Meiotically up-regulated gene 121 protein (mug121) from Schizosaccharomyces pombe (strain 972 / ATCC 24843) (Fission yeast).